We begin with the raw amino-acid sequence, 416 residues long: Floricaula/leafy homolog 2 (416 aa).

The segment at 154 to 237 (EGLSEEPVQQ…DASGGISERQ (84 aa)) is disordered. Residues 210 to 225 (AEEDEETEEGQEDDWN) are compositionally biased toward acidic residues. DNA-binding regions lie at residues 238–242 (REHPF), 307–314 (NKPKMRHY), and 378–381 (YVPT).

The protein belongs to the FLO/LFY family. Expressed in floral meristems and in indeterminate vegetative meristems.

The protein resides in the nucleus. Its function is as follows. Probable transcription factor that act to specify determinacy in the progenitor cells for both flowers and leaves. This chain is Floricaula/leafy homolog 2 (FL2), found in Nicotiana tabacum (Common tobacco).